The sequence spans 910 residues: Aconitate hydratase A (910 aa).

[4Fe-4S] cluster-binding residues include cysteine 454, cysteine 520, and cysteine 523.

This sequence belongs to the aconitase/IPM isomerase family. Monomer. The cofactor is [4Fe-4S] cluster.

It catalyses the reaction citrate = D-threo-isocitrate. The enzyme catalyses (2S,3R)-3-hydroxybutane-1,2,3-tricarboxylate = 2-methyl-cis-aconitate + H2O. It participates in carbohydrate metabolism; tricarboxylic acid cycle; isocitrate from oxaloacetate: step 2/2. Its pathway is organic acid metabolism; propanoate degradation. Functionally, involved in the catabolism of short chain fatty acids (SCFA) via the tricarboxylic acid (TCA)(acetyl degradation route) and probably the 2-methylcitrate cycle I (propionate degradation route). Catalyzes the reversible isomerization of citrate to isocitrate via cis-aconitate. Could catalyze the hydration of 2-methyl-cis-aconitate to yield (2R,3S)-2-methylisocitrate. The apo form of AcnA functions as a RNA-binding regulatory protein. The chain is Aconitate hydratase A (acnA) from Pseudomonas aeruginosa (strain ATCC 15692 / DSM 22644 / CIP 104116 / JCM 14847 / LMG 12228 / 1C / PRS 101 / PAO1).